The primary structure comprises 836 residues: Pentatricopeptide repeat-containing protein At1g79490, mitochondrial (836 aa).

The N-terminal 85 residues, 1 to 85 (MIRGRTAKVI…QCRSIVRRFC (85 aa)), are a transit peptide targeting the mitochondrion. PPR repeat units follow at residues 204–238 (SDEC…SSSH), 242–276 (SFNA…GCKI), 277–311 (DTQT…DSLL), 312–346 (DGST…KLRP), 347–381 (SFSV…GHRP), 382–416 (SATM…GFRP), 417–451 (NFGL…GFLP), 452–486 (TPST…GLRP), 487–521 (GLSS…GYSV), 528–555 (VLMI…GIKT), 556–590 (NNFI…AGKV), and 591–625 (DLVL…KHKA). A Smr domain is found at 710-786 (LDVRNLSVGA…APGELVMEWF (77 aa)).

The protein belongs to the PPR family. P subfamily.

The protein localises to the mitochondrion. The protein is Pentatricopeptide repeat-containing protein At1g79490, mitochondrial (EMB2217) of Arabidopsis thaliana (Mouse-ear cress).